Reading from the N-terminus, the 337-residue chain is tRNA N6-adenosine threonylcarbamoyltransferase (337 aa).

Positions 111 and 115 each coordinate Fe cation. Substrate is bound by residues 134–138 (LVSGG), Asp167, Gly180, and Asn272. Position 300 (Asp300) interacts with Fe cation.

Belongs to the KAE1 / TsaD family. The cofactor is Fe(2+).

It localises to the cytoplasm. It catalyses the reaction L-threonylcarbamoyladenylate + adenosine(37) in tRNA = N(6)-L-threonylcarbamoyladenosine(37) in tRNA + AMP + H(+). Required for the formation of a threonylcarbamoyl group on adenosine at position 37 (t(6)A37) in tRNAs that read codons beginning with adenine. Is involved in the transfer of the threonylcarbamoyl moiety of threonylcarbamoyl-AMP (TC-AMP) to the N6 group of A37, together with TsaE and TsaB. TsaD likely plays a direct catalytic role in this reaction. The polypeptide is tRNA N6-adenosine threonylcarbamoyltransferase (Salmonella choleraesuis (strain SC-B67)).